A 534-amino-acid chain; its full sequence is Peptide chain release factor 3 (534 aa).

The tr-type G domain maps to 9–278 (SRRRTFAIIS…FFVEHAPSPQ (270 aa)). Residues 18-25 (SHPDAGKT), 86-90 (DTPGH), and 140-143 (NKLD) contribute to the GTP site.

The protein belongs to the TRAFAC class translation factor GTPase superfamily. Classic translation factor GTPase family. PrfC subfamily.

It localises to the cytoplasm. Increases the formation of ribosomal termination complexes and stimulates activities of RF-1 and RF-2. It binds guanine nucleotides and has strong preference for UGA stop codons. It may interact directly with the ribosome. The stimulation of RF-1 and RF-2 is significantly reduced by GTP and GDP, but not by GMP. The chain is Peptide chain release factor 3 from Stenotrophomonas maltophilia (strain K279a).